The chain runs to 398 residues: Dihydroorotase (398 aa).

Positions 58 and 60 each coordinate Zn(2+). Substrate contacts are provided by residues 60 to 62 (HFR) and Asn92. Residues Asp151, His178, and His215 each contribute to the Zn(2+) site. Residue Asn256 participates in substrate binding. Asp283 is a Zn(2+) binding site. Asp283 is an active-site residue. Substrate-binding positions include His287 and 297–298 (PG).

Belongs to the metallo-dependent hydrolases superfamily. DHOase family. Class I DHOase subfamily. Zn(2+) serves as cofactor.

The catalysed reaction is (S)-dihydroorotate + H2O = N-carbamoyl-L-aspartate + H(+). It participates in pyrimidine metabolism; UMP biosynthesis via de novo pathway; (S)-dihydroorotate from bicarbonate: step 3/3. In terms of biological role, catalyzes the reversible cyclization of carbamoyl aspartate to dihydroorotate. The sequence is that of Dihydroorotase from Clostridium botulinum (strain Eklund 17B / Type B).